Consider the following 547-residue polypeptide: Probable bifunctional tRNA threonylcarbamoyladenosine biosynthesis protein (547 aa).

Residues 1-329 (MKNTFILGIE…FRTDDVNVTW (329 aa)) are kae1. His113, His117, and Tyr134 together coordinate Fe cation. Residues 134-138 (YVSGA), Asp166, Gly179, Glu183, and Asn262 contribute to the L-threonylcarbamoyladenylate site. Residue Asp290 participates in Fe cation binding. The 208-residue stretch at 340–547 (EISPEAFLRA…EEIKKRARYA (208 aa)) folds into the Protein kinase domain. Residues 355 to 363 (LDNGAEAVI) and Lys377 each bind ATP. Catalysis depends on Asp464, which acts as the Proton acceptor; for kinase activity.

It in the N-terminal section; belongs to the KAE1 / TsaD family. In the C-terminal section; belongs to the protein kinase superfamily. Tyr protein kinase family. BUD32 subfamily. Component of the KEOPS complex that consists of Kae1, Bud32, Cgi121 and Pcc1; the whole complex dimerizes. Requires Fe(2+) as cofactor.

The protein resides in the cytoplasm. The catalysed reaction is L-seryl-[protein] + ATP = O-phospho-L-seryl-[protein] + ADP + H(+). It carries out the reaction L-threonyl-[protein] + ATP = O-phospho-L-threonyl-[protein] + ADP + H(+). It catalyses the reaction L-threonylcarbamoyladenylate + adenosine(37) in tRNA = N(6)-L-threonylcarbamoyladenosine(37) in tRNA + AMP + H(+). Functionally, required for the formation of a threonylcarbamoyl group on adenosine at position 37 (t(6)A37) in tRNAs that read codons beginning with adenine. Is a component of the KEOPS complex that is probably involved in the transfer of the threonylcarbamoyl moiety of threonylcarbamoyl-AMP (TC-AMP) to the N6 group of A37. The Kae1 domain likely plays a direct catalytic role in this reaction. The Bud32 domain probably displays kinase activity that regulates Kae1 function. The sequence is that of Probable bifunctional tRNA threonylcarbamoyladenosine biosynthesis protein from Methanosarcina acetivorans (strain ATCC 35395 / DSM 2834 / JCM 12185 / C2A).